A 505-amino-acid chain; its full sequence is Maturase K (505 aa).

This sequence belongs to the intron maturase 2 family. MatK subfamily.

The protein resides in the plastid. The protein localises to the chloroplast. Its function is as follows. Usually encoded in the trnK tRNA gene intron. Probably assists in splicing its own and other chloroplast group II introns. The chain is Maturase K from Nuphar variegata (Yellow pond lily).